Reading from the N-terminus, the 161-residue chain is ATP synthase subunit b (161 aa).

The chain crosses the membrane as a helical span at residues 10–29 (AVVQLLNFLFLLWILNKLLY).

It belongs to the ATPase B chain family. As to quaternary structure, F-type ATPases have 2 components, F(1) - the catalytic core - and F(0) - the membrane proton channel. F(1) has five subunits: alpha(3), beta(3), gamma(1), delta(1), epsilon(1). F(0) has three main subunits: a(1), b(2) and c(10-14). The alpha and beta chains form an alternating ring which encloses part of the gamma chain. F(1) is attached to F(0) by a central stalk formed by the gamma and epsilon chains, while a peripheral stalk is formed by the delta and b chains.

The protein resides in the cell inner membrane. Its function is as follows. F(1)F(0) ATP synthase produces ATP from ADP in the presence of a proton or sodium gradient. F-type ATPases consist of two structural domains, F(1) containing the extramembraneous catalytic core and F(0) containing the membrane proton channel, linked together by a central stalk and a peripheral stalk. During catalysis, ATP synthesis in the catalytic domain of F(1) is coupled via a rotary mechanism of the central stalk subunits to proton translocation. Component of the F(0) channel, it forms part of the peripheral stalk, linking F(1) to F(0). This Fervidobacterium nodosum (strain ATCC 35602 / DSM 5306 / Rt17-B1) protein is ATP synthase subunit b.